The chain runs to 281 residues: Pantothenate synthetase (281 aa).

Position 26–33 (26–33 (MGSLHEGH)) interacts with ATP. Catalysis depends on histidine 33, which acts as the Proton donor. A (R)-pantoate-binding site is contributed by glutamine 57. Glutamine 57 is a binding site for beta-alanine. 144–147 (GKKD) contributes to the ATP binding site. (R)-pantoate is bound at residue glutamine 150. ATP is bound by residues alanine 173 and 181-184 (LSSR).

It belongs to the pantothenate synthetase family. As to quaternary structure, homodimer.

It localises to the cytoplasm. The enzyme catalyses (R)-pantoate + beta-alanine + ATP = (R)-pantothenate + AMP + diphosphate + H(+). It participates in cofactor biosynthesis; (R)-pantothenate biosynthesis; (R)-pantothenate from (R)-pantoate and beta-alanine: step 1/1. Catalyzes the condensation of pantoate with beta-alanine in an ATP-dependent reaction via a pantoyl-adenylate intermediate. This is Pantothenate synthetase from Methylibium petroleiphilum (strain ATCC BAA-1232 / LMG 22953 / PM1).